Consider the following 53-residue polypeptide: Metallocarboxypeptidase inhibitor b (53 aa).

3 disulfide bridges follow: Cys-9/Cys-23, Cys-15/Cys-51, and Cys-27/Cys-38. Ala-53 contributes to the Zn(2+) binding site.

Metallocarboxypeptidase inhibitor. Has an inhibitory effect on bovine CPA1 and porcine CPB1. Does not inhibit D.melanogaster svr (carboxypeptidase D). Shows no activity against serine proteases subtilisin or bovine trypsin, cysteine protease papain, and aspartyl protease porcine pepsin. In Nerita versicolor (Four-tooth nerite), this protein is Metallocarboxypeptidase inhibitor b.